The primary structure comprises 434 residues: Glutamyl-tRNA reductase (434 aa).

Residues 49–52 (TCNR), Ser109, 114–116 (EPQ), and Gln120 each bind substrate. Cys50 acts as the Nucleophile in catalysis. 189 to 194 (GAGEMA) is a binding site for NADP(+).

Belongs to the glutamyl-tRNA reductase family. Homodimer.

It carries out the reaction (S)-4-amino-5-oxopentanoate + tRNA(Glu) + NADP(+) = L-glutamyl-tRNA(Glu) + NADPH + H(+). It participates in porphyrin-containing compound metabolism; protoporphyrin-IX biosynthesis; 5-aminolevulinate from L-glutamyl-tRNA(Glu): step 1/2. Its function is as follows. Catalyzes the NADPH-dependent reduction of glutamyl-tRNA(Glu) to glutamate 1-semialdehyde (GSA). This is Glutamyl-tRNA reductase from Desulfatibacillum aliphaticivorans.